We begin with the raw amino-acid sequence, 477 residues long: Cysteine--tRNA ligase (477 aa).

Zn(2+) is bound at residue Cys-30. Residues 32 to 42 (PTVYDYNHIGH) carry the 'HIGH' region motif. Positions 209, 234, and 238 each coordinate Zn(2+). The 'KMSKS' region signature appears at 267–271 (KMSKS). Residue Lys-270 participates in ATP binding.

This sequence belongs to the class-I aminoacyl-tRNA synthetase family. It depends on Zn(2+) as a cofactor.

It is found in the cytoplasm. The catalysed reaction is tRNA(Cys) + L-cysteine + ATP = L-cysteinyl-tRNA(Cys) + AMP + diphosphate. This chain is Cysteine--tRNA ligase, found in Staphylothermus marinus (strain ATCC 43588 / DSM 3639 / JCM 9404 / F1).